The sequence spans 204 residues: Protein GrpE (204 aa).

Residues 1–42 are disordered; sequence MTDETAKNGPDAAADAQIEPQVQEETNSTAEDAGQDNNPTAA. The segment covering 23-41 has biased composition (polar residues); it reads QEETNSTAEDAGQDNNPTA.

Belongs to the GrpE family. Homodimer.

The protein resides in the cytoplasm. Its function is as follows. Participates actively in the response to hyperosmotic and heat shock by preventing the aggregation of stress-denatured proteins, in association with DnaK and GrpE. It is the nucleotide exchange factor for DnaK and may function as a thermosensor. Unfolded proteins bind initially to DnaJ; upon interaction with the DnaJ-bound protein, DnaK hydrolyzes its bound ATP, resulting in the formation of a stable complex. GrpE releases ADP from DnaK; ATP binding to DnaK triggers the release of the substrate protein, thus completing the reaction cycle. Several rounds of ATP-dependent interactions between DnaJ, DnaK and GrpE are required for fully efficient folding. The polypeptide is Protein GrpE (Allorhizobium ampelinum (strain ATCC BAA-846 / DSM 112012 / S4) (Agrobacterium vitis (strain S4))).